A 255-amino-acid chain; its full sequence is Cytochrome c oxidase subunit 3 (255 aa).

The next 7 membrane-spanning stretches (helical) occupy residues 12–29, 57–77, 91–111, 126–146, 155–175, 196–216, and 235–255; these read INII…STGL, LKYL…INGI, IFGM…WGFF, LEAF…ISLI, YFEV…FLSF, FNVL…FALM, and GMYW…LFLL.

The protein belongs to the cytochrome c oxidase subunit 3 family. As to quaternary structure, component of the cytochrome c oxidase (complex IV, CIV), a multisubunit enzyme composed of a catalytic core of 3 subunits and several supernumerary subunits. The complex exists as a monomer or a dimer and forms supercomplexes (SCs) in the inner mitochondrial membrane with ubiquinol-cytochrome c oxidoreductase (cytochrome b-c1 complex, complex III, CIII).

It localises to the mitochondrion inner membrane. It catalyses the reaction 4 Fe(II)-[cytochrome c] + O2 + 8 H(+)(in) = 4 Fe(III)-[cytochrome c] + 2 H2O + 4 H(+)(out). Functionally, component of the cytochrome c oxidase, the last enzyme in the mitochondrial electron transport chain which drives oxidative phosphorylation. The respiratory chain contains 3 multisubunit complexes succinate dehydrogenase (complex II, CII), ubiquinol-cytochrome c oxidoreductase (cytochrome b-c1 complex, complex III, CIII) and cytochrome c oxidase (complex IV, CIV), that cooperate to transfer electrons derived from NADH and succinate to molecular oxygen, creating an electrochemical gradient over the inner membrane that drives transmembrane transport and the ATP synthase. Cytochrome c oxidase is the component of the respiratory chain that catalyzes the reduction of oxygen to water. Electrons originating from reduced cytochrome c in the intermembrane space (IMS) are transferred via the dinuclear copper A center (CU(A)) of subunit 2 and heme A of subunit 1 to the active site in subunit 1, a binuclear center (BNC) formed by heme A3 and copper B (CU(B)). The BNC reduces molecular oxygen to 2 water molecules using 4 electrons from cytochrome c in the IMS and 4 protons from the mitochondrial matrix. This Theileria annulata protein is Cytochrome c oxidase subunit 3 (MT-CO3).